The chain runs to 188 residues: Large ribosomal subunit protein eL18 (188 aa).

Lysine 119 participates in a covalent cross-link: Glycyl lysine isopeptide (Lys-Gly) (interchain with G-Cter in SUMO2). Serine 130 carries the post-translational modification Phosphoserine. Positions 150–188 (RHFGKAPGTPHSHTKPYVRSKGRKFERARGRRASRGYKN) are disordered. Threonine 158 bears the Phosphothreonine mark. 2 stretches are compositionally biased toward basic residues: residues 161 to 171 (SHTKPYVRSKG) and 178 to 188 (RGRRASRGYKN). Lysine 164 participates in a covalent cross-link: Glycyl lysine isopeptide (Lys-Gly) (interchain with G-Cter in SUMO2).

This sequence belongs to the eukaryotic ribosomal protein eL18 family. Component of the large ribosomal subunit.

It is found in the cytoplasm. The protein localises to the cytosol. Its subcellular location is the rough endoplasmic reticulum. Functionally, component of the large ribosomal subunit. The ribosome is a large ribonucleoprotein complex responsible for the synthesis of proteins in the cell. This chain is Large ribosomal subunit protein eL18 (Rpl18), found in Mus musculus (Mouse).